The primary structure comprises 53 residues: Large ribosomal subunit protein bL33A (53 aa).

Belongs to the bacterial ribosomal protein bL33 family.

This Mycoplasmoides gallisepticum (strain R(low / passage 15 / clone 2)) (Mycoplasma gallisepticum) protein is Large ribosomal subunit protein bL33A.